The following is a 331-amino-acid chain: DNA polymerase IV (331 aa).

The UmuC domain maps to 1–174; the sequence is FFAAVEMRDN…LPLAKIPGVG (174 aa). Residue D92 participates in Mg(2+) binding. E93 is a catalytic residue.

Belongs to the DNA polymerase type-Y family. As to quaternary structure, monomer. It depends on Mg(2+) as a cofactor.

It localises to the cytoplasm. The enzyme catalyses DNA(n) + a 2'-deoxyribonucleoside 5'-triphosphate = DNA(n+1) + diphosphate. Its function is as follows. Poorly processive, error-prone DNA polymerase involved in untargeted mutagenesis. Copies undamaged DNA at stalled replication forks, which arise in vivo from mismatched or misaligned primer ends. These misaligned primers can be extended by PolIV. Exhibits no 3'-5' exonuclease (proofreading) activity. May be involved in translesional synthesis, in conjunction with the beta clamp from PolIII. The chain is DNA polymerase IV from Escherichia fergusonii.